The following is a 614-amino-acid chain: Zinc metalloproteinase-disintegrin-like protein H4 subunit A (614 aa).

Positions 1 to 20 (MIQPLLVVTCLVVFPYQVSS) are cleaved as a signal peptide. A propeptide spanning residues 21–193 (IILESGNVND…RKASQLVATS (173 aa)) is cleaved from the precursor. Glu-194 carries the pyrrolidone carboxylic acid (Glu) modification. A Peptidase M12B domain is found at 201-397 (KYIELVIVVD…IKSKCIDNKP (197 aa)). A glycan (N-linked (GlcNAc...) asparagine) is linked at Asn-220. Disulfide bonds link Cys-312-Cys-392, Cys-352-Cys-376, Cys-354-Cys-359, Cys-408-Cys-437, Cys-419-Cys-432, Cys-421-Cys-427, Cys-431-Cys-454, Cys-445-Cys-451, Cys-450-Cys-476, Cys-463-Cys-483, Cys-470-Cys-502, Cys-495-Cys-507, Cys-514-Cys-564, Cys-529-Cys-575, Cys-542-Cys-552, Cys-559-Cys-601, and Cys-595-Cys-607. His-337 contributes to the Zn(2+) binding site. A Metal-binding motif is present at residues 337 to 348 (HELGHNLGMDHD). The active-site Proton acceptor is Glu-338. His-341 and His-347 together coordinate Zn(2+). A Disintegrin domain is found at 405–491 (PAFCGNYFVE…ECPTDVLQRN (87 aa)). Ca(2+)-binding residues include Asn-410, Phe-412, Glu-414, Glu-417, and Asp-420. An N-linked (GlcNAc...) asparagine glycan is attached at Asn-433. Positions 469 to 471 (ECD) match the D/ECD-tripeptide motif. Ca(2+) is bound by residues Asp-471 and Asp-486.

It belongs to the venom metalloproteinase (M12B) family. P-III subfamily. Homodimer; disulfide-linked. Heterodimer of A and B subunits; disulfide-linked. Zn(2+) is required as a cofactor. Post-translationally, N-glycosylated. The N-terminus is blocked. As to expression, expressed by the venom gland (at protein level). Expressed by the venom gland.

The protein localises to the secreted. The proteolytic activity of the heterodimer of A and B subunits requires Zn(2+) and Ca(2+) ions. Heterodimer (A and B subunits): Zinc metalloprotease that has fibrinogenolytic and hemorrhagic activities. Cleaves insulin B chain preferably at '40-Tyr-|-Leu-41' bond, but also at '28-Gln-|-His-29' and '34-His-|-Leu-35' bonds. Hydrolyzes effectively isolated extracellular matrix (ECM) bovine fibronectin, and only slightly, basal membrane (BM) proteins human collagen IV and murine laminin, in vitro. Cleaves nidogen-1 (at '350-Ser-|-Phe-351' and '380-Tyr-|-Asn-381' bonds), but not laminin, in a solubilized BM preparation. Hydrolyzes plasma proteins involved in blood coagulation in vitro. It slightly shortens prothrombin time and significantly prolongs thrombin time. Has potent alpha-fibrinogenase activity cleaving human fibrinogen alpha chain at '441-Glu-|-Leu-442' and '539-Glu-|-Phe-540' bonds, and to a lesser extent, beta chain at '52-Lys-|-Arg-53' and '48-Pro-|-Leu-49' bonds, but does not cleave gamma chain. Hydrolyzes bovine prothrombin at '200-Ser-|-Gly-201' bond, but does not activate it, however, it cleaves fragment 1 and prethrombin 1 from it. Hydrolyzes bovine factor X heavy chain, but the cleavage does not produce an activated factor Xa heavy chain. No hydrolysis or activation of plasminogen. The ability to degrade some of the ECM, BM and plasma proteins is likely the main contributor to its hemorrhagic activity. Inhibits platelet aggregation induced by collagen in vitro. Its binding to glycosaminoglycans (GAGs) may assist in concentrating it in the proximity of blood vessel walls enabling in vivo degradation of BM protein components. Cytotoxic to cultured HeLa cancer cells in a concentration- and time-dependent manner. In the solubilized BM preparation (Matrigel), it induces morphological changes in the HeLa cells and inhibits their adhesion, however, the viability of the cells is not reduced. The polypeptide is Zinc metalloproteinase-disintegrin-like protein H4 subunit A (Vipera ammodytes ammodytes (Western sand viper)).